Here is a 132-residue protein sequence, read N- to C-terminus: Large ribosomal subunit protein uL14 (132 aa).

The protein belongs to the universal ribosomal protein uL14 family. Part of the 50S ribosomal subunit. Forms a cluster with proteins L3 and L24e, part of which may contact the 16S rRNA in 2 intersubunit bridges.

Functionally, binds to 23S rRNA. Forms part of two intersubunit bridges in the 70S ribosome. This Halobacterium salinarum (strain ATCC 29341 / DSM 671 / R1) protein is Large ribosomal subunit protein uL14.